Consider the following 846-residue polypeptide: Homeodomain-interacting protein kinase 1 (846 aa).

A disordered region spans residues asparagine 47 to alanine 74. Residues asparagine 61 to glutamate 72 are compositionally biased toward basic and acidic residues. The Protein kinase domain occupies tyrosine 147 to valine 483. ATP is bound by residues leucine 153–valine 161 and lysine 176. Aspartate 272 acts as the Proton acceptor in catalysis. The disordered stretch occupies residues leucine 741–methionine 790. Residues lysine 746 to leucine 757 show a composition bias toward polar residues. A compositionally biased stretch (low complexity) spans asparagine 764–serine 773.

It belongs to the protein kinase superfamily. CMGC Ser/Thr protein kinase family. HIPK subfamily. As to expression, broadly expressed during embryogenesis. Expression becomes more restricted during larval development. L3 larvae display robust expression in many head and motor neurons, and lower levels of expression in the intestine and the seam cells of the hypodermis. By late L4 stage, expression is largely restricted to neurons and is maintained in nerve cells of the head and nerve cord during adulthood. Expressed in adult pharyngeal cells, hypodermal cells, gonadal sheath cells and distal tip cells but not in germline cells. Expressed in serotonergic neurons such as ADF and NSM and in GABAergic neurons, including RME, RIS and DVB.

The protein resides in the nucleus. It carries out the reaction L-seryl-[protein] + ATP = O-phospho-L-seryl-[protein] + ADP + H(+). The enzyme catalyses L-threonyl-[protein] + ATP = O-phospho-L-threonyl-[protein] + ADP + H(+). In terms of biological role, serine/threonine-protein kinase required in the somatic gonadal cells to regulate germline proliferation during larval development and in adulthood. Plays a role in the development/differentiation of gonadal distal tip cells. Required for normal lifespan in a pha-4 and mxl-2-dependent manner. Also contributes to survival following heat or oxidative stress. Prevents sumoylation and inactivation of heat shock transcription factor hsf-1 which enhances hsf-1-dependent transcriptional induction of chaperones in response to heat shock. Also required for hormetic extension of longevity in response to heat stress. Also contributes to longevity by promoting autophagy under nutrient stress conditions through induction of autophagosome formation and autophagy gene expression. Provides protection against proteotoxic polyglutamine aggregate and the associated locomotory toxicity, probably as a result of kinase activity. Contributes to longevity via gamma-aminobutyric acid (GABA)ergic signaling by promoting autophagy through mxl-2, hlh-30 and daf-16 but independent of hsf-1 and phas-4, to induce autophagosome formation and the expression of autophagy genes. Promotes thermotolerance via serotonergic signaling by serotonergic neurons. Preserves neuronal function in aging animals by mitigating against age-associated decline in axonal and synaptic transmissions. Acts as an activator of nhr-49-dependent hypoxia response, including the up-regulation of fmo-2 and acs-2, the induction of autophagosome formation and expression of autophagy genes. This chain is Homeodomain-interacting protein kinase 1, found in Caenorhabditis elegans.